The primary structure comprises 665 residues: MLKKHEKFYYGGDYNPEQWDESVWKEDMRLMKKAGVNYVSINIFSWARLQPDEETYDFSTLDKIMDMLAENGIGADLATATAAPPAWLSRKYPDSLPVDKDGSRFLPGSRQHYCPNSKDYARLAAKLVRKIAERYKSHPALVMWHVNNEYGCHISECYCDNCKKGFQTWLKEKYGTIENLNKSWSTDFWSQRYYEWEEICLPGKTPTFANPMQQLDYKAFMDDSLLALYKMERDILKTYTPDVPVMTNLMGLHKPVDGFHWAKEMDLVTWDAYPDPFEDIPYAQFMAHDLTRSLKKQPFLLMEQAAGAVNWRAQNAVKAPGVMRLWSYEAAAHGADGIMFFQWRASQGGAEKFHSGMVPHSGDEESRNFREVVQLGNELKNLEKVTGSAYASDVAIVFDWKNWWALELDSKPSSLVTYIKQLLPFYRVLHTQNIGVDFIHPDEAMDRYKVVFAPASYRVTKTFADKVKAYVENGGYFATNFFSGIADENERVYLGGYPGAYRDILGIYVEEFAPMKKGAVHQIRTGYGDAAIRVWEEKIHLKGAEALAWFKDGYLAGSPAVTAHHCGKGKAYYIGTQPDEQYLSSLLKEILKEADVRPALDAPRGVEVAVRKNGHEKFLFLLNHTDQVQFVDAGGTYPELIYGRTEAETVRLSPRDVKILQVIEK.

Arg-110 lines the substrate pocket. Cys-114 is a Zn(2+) binding site. Residue Asn-148 participates in substrate binding. Glu-149 serves as the catalytic Proton donor. Residues Cys-157, Cys-159, and Cys-162 each coordinate Zn(2+). The active-site Nucleophile is Glu-303. Residues Trp-311 and Glu-351–His-354 contribute to the substrate site.

The protein belongs to the glycosyl hydrolase 42 family.

The catalysed reaction is Hydrolysis of terminal non-reducing beta-D-galactose residues in beta-D-galactosides.. The polypeptide is Beta-galactosidase LacZ (Heyndrickxia coagulans (Weizmannia coagulans)).